Consider the following 808-residue polypeptide: Protein SQS1 (808 aa).

Composition is skewed to basic residues over residues 1–20 and 28–37; these read MAKR…KRGG and RGSKRGRGGR. Disordered stretches follow at residues 1–67, 151–180, and 485–529; these read MAKR…GDLS, RSKN…DMEI, and ETPP…EELG. 2 stretches are compositionally biased toward basic and acidic residues: residues 39–48 and 153–179; these read RGFEETERSA and KNQE…KDME. Positions 621 to 683 constitute an R3H domain; the sequence is GFHVQNIRDE…HTHIMVEKVK (63 aa). Residues 748-795 form the G-patch domain; that stretch reads QDNIGRRMLEKLGWSSGEGLGAHGNKGISIPVMARVKKSKSGLRHSKE. The tract at residues 764–808 is disordered; that stretch reads GEGLGAHGNKGISIPVMARVKKSKSGLRHSKEDEDTGRSSSFRKK. Over residues 782–791 the composition is skewed to basic residues; the sequence is RVKKSKSGLR.

Belongs to the SQS1 family.

The protein localises to the cytoplasm. It localises to the nucleus. Its function is as follows. May be involved in splicing. This Candida glabrata (strain ATCC 2001 / BCRC 20586 / JCM 3761 / NBRC 0622 / NRRL Y-65 / CBS 138) (Yeast) protein is Protein SQS1 (SQS1).